Reading from the N-terminus, the 325-residue chain is DNA-directed RNA polymerase subunit alpha (325 aa).

The alpha N-terminal domain (alpha-NTD) stretch occupies residues methionine 1–glutamate 231. An alpha C-terminal domain (alpha-CTD) region spans residues valine 246–lysine 325.

It belongs to the RNA polymerase alpha chain family. As to quaternary structure, homodimer. The RNAP catalytic core consists of 2 alpha, 1 beta, 1 beta' and 1 omega subunit. When a sigma factor is associated with the core the holoenzyme is formed, which can initiate transcription.

The catalysed reaction is RNA(n) + a ribonucleoside 5'-triphosphate = RNA(n+1) + diphosphate. Functionally, DNA-dependent RNA polymerase catalyzes the transcription of DNA into RNA using the four ribonucleoside triphosphates as substrates. The protein is DNA-directed RNA polymerase subunit alpha of Janthinobacterium sp. (strain Marseille) (Minibacterium massiliensis).